Here is a 337-residue protein sequence, read N- to C-terminus: Probable allantoicase 1 (337 aa).

It belongs to the allantoicase family.

The catalysed reaction is allantoate + H2O = (S)-ureidoglycolate + urea. It participates in nitrogen metabolism; (S)-allantoin degradation; (S)-ureidoglycolate from allantoate (aminidohydrolase route): step 1/1. The protein is Probable allantoicase 1 of Burkholderia mallei (strain ATCC 23344).